The sequence spans 150 residues: NADH-quinone oxidoreductase subunit A (150 aa).

3 consecutive transmembrane segments (helical) span residues 14–34 (WAFAVFLIGALGLCSLMLLGA), 70–90 (LVAMFFVIFDVEALFLYAWAV), and 98–118 (LGFIEAAVFIAILLAGLFYLV).

The protein belongs to the complex I subunit 3 family. As to quaternary structure, NDH-1 is composed of 13 different subunits. Subunits NuoA, H, J, K, L, M, N constitute the membrane sector of the complex.

It localises to the cell inner membrane. The enzyme catalyses a quinone + NADH + 5 H(+)(in) = a quinol + NAD(+) + 4 H(+)(out). Functionally, NDH-1 shuttles electrons from NADH, via FMN and iron-sulfur (Fe-S) centers, to quinones in the respiratory chain. The immediate electron acceptor for the enzyme in this species is believed to be ubiquinone. Couples the redox reaction to proton translocation (for every two electrons transferred, four hydrogen ions are translocated across the cytoplasmic membrane), and thus conserves the redox energy in a proton gradient. This chain is NADH-quinone oxidoreductase subunit A, found in Proteus mirabilis (strain HI4320).